The sequence spans 86 residues: Large ribosomal subunit protein bL27 (86 aa).

The tract at residues 1 to 22 (MATKKAGGSSRNGRDSAGRRLG) is disordered.

The protein belongs to the bacterial ribosomal protein bL27 family.

The protein is Large ribosomal subunit protein bL27 of Rickettsia rickettsii (strain Iowa).